We begin with the raw amino-acid sequence, 422 residues long: 3-phosphoshikimate 1-carboxyvinyltransferase (422 aa).

Positions 24, 25, and 29 each coordinate 3-phosphoshikimate. Lys24 contacts phosphoenolpyruvate. Residues Gly93 and Arg121 each coordinate phosphoenolpyruvate. Ser164, Ser165, Gln166, Glu308, and His335 together coordinate 3-phosphoshikimate. Gln166 lines the phosphoenolpyruvate pocket. Glu308 serves as the catalytic Proton acceptor. Residues Arg339, Arg380, and Lys405 each contribute to the phosphoenolpyruvate site.

Belongs to the EPSP synthase family. Monomer.

The protein resides in the cytoplasm. The enzyme catalyses 3-phosphoshikimate + phosphoenolpyruvate = 5-O-(1-carboxyvinyl)-3-phosphoshikimate + phosphate. The protein operates within metabolic intermediate biosynthesis; chorismate biosynthesis; chorismate from D-erythrose 4-phosphate and phosphoenolpyruvate: step 6/7. In terms of biological role, catalyzes the transfer of the enolpyruvyl moiety of phosphoenolpyruvate (PEP) to the 5-hydroxyl of shikimate-3-phosphate (S3P) to produce enolpyruvyl shikimate-3-phosphate and inorganic phosphate. The polypeptide is 3-phosphoshikimate 1-carboxyvinyltransferase (Saccharopolyspora erythraea (strain ATCC 11635 / DSM 40517 / JCM 4748 / NBRC 13426 / NCIMB 8594 / NRRL 2338)).